The primary structure comprises 119 residues: Large ribosomal subunit protein uL22 (119 aa).

Belongs to the universal ribosomal protein uL22 family. As to quaternary structure, part of the 50S ribosomal subunit.

Functionally, this protein binds specifically to 23S rRNA; its binding is stimulated by other ribosomal proteins, e.g. L4, L17, and L20. It is important during the early stages of 50S assembly. It makes multiple contacts with different domains of the 23S rRNA in the assembled 50S subunit and ribosome. The globular domain of the protein is located near the polypeptide exit tunnel on the outside of the subunit, while an extended beta-hairpin is found that lines the wall of the exit tunnel in the center of the 70S ribosome. The polypeptide is Large ribosomal subunit protein uL22 (Rickettsia peacockii (strain Rustic)).